The following is a 359-amino-acid chain: Lipopolysaccharide 1,6-galactosyltransferase (359 aa).

The UDP site is built by Gln242 and Glu274.

This sequence belongs to the glycosyltransferase group 1 family. Glycosyltransferase 4 subfamily.

It carries out the reaction alpha-D-Glc-(1-&gt;3)-[L-alpha-D-Hep-(1-&gt;7)]-4-O-PO3(2-)-L-alpha-D-Hep-(1-&gt;3)-4-O-PO3(2-)-L-alpha-D-Hep-(1-&gt;5)-[alpha-Kdo-(2-&gt;4)]-alpha-Kdo-(2-&gt;6)-lipid A + UDP-alpha-D-galactose = alpha-D-Gal-(1-&gt;6)-alpha-D-Glc-(1-&gt;3)-[L-alpha-D-Hep-(1-&gt;7)]-4-O-PO3(2-)-L-alpha-D-Hep-(1-&gt;3)-4-O-PO3(2-)-L-alpha-D-Hep-(1-&gt;5)-[alpha-Kdo-(2-&gt;4)]-alpha-Kdo-(2-&gt;6)-lipid A + UDP + H(+). Its pathway is bacterial outer membrane biogenesis; LPS core biosynthesis. In terms of biological role, galactosyltransferase involved in the biosynthesis of the core oligosaccharide region of lipopolysaccharide (LPS). Catalyzes the addition of galactose from UDP-galactose to the first glucose residue of the LPS outer core. Cannot use other sugar donors, such as UDP-glucose, UDP-glucuronic acid, UDP-galacuronic acid, GDP-mannose, ADP-glucose and GDP-glucose. In the absence of a lipid acceptor, can hydrolyze UDP-galactose to UDP and galactose. The protein is Lipopolysaccharide 1,6-galactosyltransferase of Escherichia coli (strain K12).